Here is a 166-residue protein sequence, read N- to C-terminus: Succinate dehydrogenase assembly factor 2, mitochondrial (166 aa).

The transit peptide at 1-29 directs the protein to the mitochondrion; sequence MAVVAVFPALARMLAVSRRRLVSPSLSMT.

Belongs to the SDHAF2 family. In terms of assembly, interacts with SDHA within the SDH catalytic dimer.

The protein localises to the mitochondrion matrix. Functionally, plays an essential role in the assembly of succinate dehydrogenase (SDH), an enzyme complex (also referred to as respiratory complex II) that is a component of both the tricarboxylic acid (TCA) cycle and the mitochondrial electron transport chain, and which couples the oxidation of succinate to fumarate with the reduction of ubiquinone (coenzyme Q) to ubiquinol. Required for flavinylation (covalent attachment of FAD) of the flavoprotein subunit SDHA of the SDH catalytic dimer. This is Succinate dehydrogenase assembly factor 2, mitochondrial from Bos taurus (Bovine).